The primary structure comprises 311 residues: MDDSRKAYVVAQDLHNAIMQRDAITISEITGRYVSGYREKIALAFMEQYNVLPADLFKEWGTGYFESLMIRCWTNRHEARAKMLKEAIRGALDRDALVDLVILCSTDDWASTLVHYQKHFRIALKADIRLNMPADRPWKALIDRWMEHDRHYRNNVKTDAHMLLQALEGGNGAAIVDILVTTKPQEWEKIVAAYEEHTNKSLETAICMAFPGFEQTAFCAAHYWLCEPSKAAAFLIHRACEGKRGDFRRVCRITSLVLDQCLKCKYVYSVYGHLAADFRKTFSDNTAIPLISLWRAYDIGKILAEKHENIT.

4 Annexin repeats span residues 5–73 (RKAY…IRCW), 75–146 (NRHE…DRWM), 154–223 (NNVK…AAHY), and 227–295 (EPSK…SLWR).

It belongs to the annexin family. Giardin subunit alpha subfamily.

The protein localises to the cytoplasm. It is found in the cytoskeleton. Giardins are involved in parasite attachment to the intestinal mucosa and in the cytoskeletal disassembly and reassembly that marks the transition from infectious trophozoite to transmissible cyst. They may interact with other cytoskeletal proteins such as microtubules in the microribbons or crossbridges, to maintain the integrity of the ventral disk. In Giardia intestinalis (Giardia lamblia), this protein is Giardin subunit alpha-8.